Reading from the N-terminus, the 928-residue chain is Kinesin heavy chain (928 aa).

The Kinesin motor domain occupies Ser-7–Ile-330. Residues Gly-88–Ser-95 and Gly-238–Thr-245 each bind ATP. The stretch at Ala-343 to Ala-866 forms a coiled coil. Positions Ser-395–Arg-409 are enriched in low complexity. 2 disordered regions span residues Ser-395–Lys-434 and Gly-893–Ser-928. Polar residues predominate over residues Asn-905–Ser-928.

This sequence belongs to the TRAFAC class myosin-kinesin ATPase superfamily. Kinesin family. Kinesin subfamily.

The protein resides in the cytoplasm. It localises to the cytoskeleton. Kinesin is a microtubule-associated force-producing protein that may play a role in organelle transport. Its motor activity is directed toward the microtubule's plus end. The chain is Kinesin heavy chain (kin) from Neurospora crassa (strain ATCC 24698 / 74-OR23-1A / CBS 708.71 / DSM 1257 / FGSC 987).